The sequence spans 296 residues: Bifunctional protein FolD (296 aa).

NADP(+) is bound by residues 169–171 (GRG), Thr196, and Val237.

Belongs to the tetrahydrofolate dehydrogenase/cyclohydrolase family. As to quaternary structure, homodimer.

It catalyses the reaction (6R)-5,10-methylene-5,6,7,8-tetrahydrofolate + NADP(+) = (6R)-5,10-methenyltetrahydrofolate + NADPH. The enzyme catalyses (6R)-5,10-methenyltetrahydrofolate + H2O = (6R)-10-formyltetrahydrofolate + H(+). The protein operates within one-carbon metabolism; tetrahydrofolate interconversion. Catalyzes the oxidation of 5,10-methylenetetrahydrofolate to 5,10-methenyltetrahydrofolate and then the hydrolysis of 5,10-methenyltetrahydrofolate to 10-formyltetrahydrofolate. The chain is Bifunctional protein FolD from Kocuria rhizophila (strain ATCC 9341 / DSM 348 / NBRC 103217 / DC2201).